We begin with the raw amino-acid sequence, 538 residues long: Calcium-dependent protein kinase 32 (538 aa).

Residues 1–37 (MGNCCGTAGSLAQNDNKPKKGRKKQNPFSIDYGLHHG) are disordered. Residue Gly-2 is the site of N-myristoyl glycine attachment. One can recognise a Protein kinase domain in the interval 63 to 321 (YTLGRELGRG…AQQVLDHPWL (259 aa)). ATP contacts are provided by residues 69-77 (LGRGEFGVT) and Lys-92. Asp-187 serves as the catalytic Proton acceptor. Position 227 is a phosphoserine (Ser-227). Residues 327–357 (APNVSLGETVRARLKQFTVMNKLKKRALRVI) are autoinhibitory domain. 4 EF-hand domains span residues 364-399 (EEASGIREGFQIMDTSQRGKINIDELKIGLQKLGHA), 400-435 (IPQDDLQILMDAGDIDRDGYLDCDEFIAISVHLRKM), 436-470 (GNDEHLKKAFAFFDQNNNGYIEIEELREALSDELG), and 471-506 (TSEEVVDAIIRDVDTDKDGRISYEEFVTMMKTGTDW). Residues Asp-377, Ser-379, Lys-383, Glu-388, Asp-413, Asp-415, Asp-417, Tyr-419, Glu-424, Asp-449, Asn-451, Asn-453, Tyr-455, Glu-460, Asp-484, Asp-486, Asp-488, and Arg-490 each contribute to the Ca(2+) site. Ser-492 bears the Phosphoserine mark. Glu-495 contacts Ca(2+).

This sequence belongs to the protein kinase superfamily. Ser/Thr protein kinase family. CDPK subfamily. In terms of assembly, interacts with ABF4. Interacts with CNGC18. As to expression, expressed in embryos and most of the vegetative tissues.

The protein resides in the nucleus. The protein localises to the membrane. The catalysed reaction is L-seryl-[protein] + ATP = O-phospho-L-seryl-[protein] + ADP + H(+). It catalyses the reaction L-threonyl-[protein] + ATP = O-phospho-L-threonyl-[protein] + ADP + H(+). Activated by calcium. Autophosphorylation may play an important role in the regulation of the kinase activity. In terms of biological role, may play a role in signal transduction pathways that involve calcium as a second messenger. Involved in maintaining Ca2+ homeostasis in pollen tube tips by regulating CNGC18. Functions as regulator of the calcium-mediated abscisic acid (ABA) signaling pathway. Phosphorylates ABA-responsive transcription factor ABF4 in vitro. In Arabidopsis thaliana (Mouse-ear cress), this protein is Calcium-dependent protein kinase 32.